We begin with the raw amino-acid sequence, 613 residues long: Dihydroxy-acid dehydratase (613 aa).

Position 81 (Asp-81) interacts with Mg(2+). Cys-122 contacts [2Fe-2S] cluster. Mg(2+)-binding residues include Asp-123 and Lys-124. An N6-carboxylysine modification is found at Lys-124. Cys-195 contributes to the [2Fe-2S] cluster binding site. Glu-491 serves as a coordination point for Mg(2+). Ser-517 serves as the catalytic Proton acceptor.

This sequence belongs to the IlvD/Edd family. Homodimer. [2Fe-2S] cluster is required as a cofactor. The cofactor is Mg(2+).

The enzyme catalyses (2R)-2,3-dihydroxy-3-methylbutanoate = 3-methyl-2-oxobutanoate + H2O. It catalyses the reaction (2R,3R)-2,3-dihydroxy-3-methylpentanoate = (S)-3-methyl-2-oxopentanoate + H2O. It participates in amino-acid biosynthesis; L-isoleucine biosynthesis; L-isoleucine from 2-oxobutanoate: step 3/4. The protein operates within amino-acid biosynthesis; L-valine biosynthesis; L-valine from pyruvate: step 3/4. In terms of biological role, functions in the biosynthesis of branched-chain amino acids. Catalyzes the dehydration of (2R,3R)-2,3-dihydroxy-3-methylpentanoate (2,3-dihydroxy-3-methylvalerate) into 2-oxo-3-methylpentanoate (2-oxo-3-methylvalerate) and of (2R)-2,3-dihydroxy-3-methylbutanoate (2,3-dihydroxyisovalerate) into 2-oxo-3-methylbutanoate (2-oxoisovalerate), the penultimate precursor to L-isoleucine and L-valine, respectively. This is Dihydroxy-acid dehydratase from Photobacterium profundum (strain SS9).